The chain runs to 221 residues: Holliday junction branch migration complex subunit RuvA (221 aa).

The segment at M1 to A61 is domain I. Residues S62 to T139 are domain II. The disordered stretch occupies residues E133 to D155. Residues E140–N166 form a flexible linker region. Residues S146 to D155 show a composition bias toward basic and acidic residues. Positions L167–N221 are domain III.

This sequence belongs to the RuvA family. In terms of assembly, homotetramer. Forms an RuvA(8)-RuvB(12)-Holliday junction (HJ) complex. HJ DNA is sandwiched between 2 RuvA tetramers; dsDNA enters through RuvA and exits via RuvB. An RuvB hexamer assembles on each DNA strand where it exits the tetramer. Each RuvB hexamer is contacted by two RuvA subunits (via domain III) on 2 adjacent RuvB subunits; this complex drives branch migration. In the full resolvosome a probable DNA-RuvA(4)-RuvB(12)-RuvC(2) complex forms which resolves the HJ.

Its subcellular location is the cytoplasm. In terms of biological role, the RuvA-RuvB-RuvC complex processes Holliday junction (HJ) DNA during genetic recombination and DNA repair, while the RuvA-RuvB complex plays an important role in the rescue of blocked DNA replication forks via replication fork reversal (RFR). RuvA specifically binds to HJ cruciform DNA, conferring on it an open structure. The RuvB hexamer acts as an ATP-dependent pump, pulling dsDNA into and through the RuvAB complex. HJ branch migration allows RuvC to scan DNA until it finds its consensus sequence, where it cleaves and resolves the cruciform DNA. The sequence is that of Holliday junction branch migration complex subunit RuvA from Mesomycoplasma hyopneumoniae (strain J / ATCC 25934 / NCTC 10110) (Mycoplasma hyopneumoniae).